The primary structure comprises 351 residues: RISC-loading complex subunit tarbp2 (351 aa).

Positions 1-22 (MSENGDCEHQTSSGFPSIEQML) are disordered. 2 DRBM domains span residues 29–96 (TPIS…LLKE) and 150–218 (NPVG…QIHQ). The tract at residues 221–243 (AEHRESGETEPEEDQFSVGKLDG) is disordered. In terms of domain architecture, DRBM 3 spans 278-346 (GFCSLLQDLS…AHNALQYLKI (69 aa)).

The protein belongs to the TARBP2 family. As to quaternary structure, self-associates. Component of the RISC loading complex (RLC), or micro-RNA (miRNA) loading complex (miRLC), which is composed of dicer1, ago2 and tarbp2. Note that the trimeric RLC/miRLC is also referred to as RISC.

Its subcellular location is the cytoplasm. Functionally, required for formation of the RNA induced silencing complex (RISC). Component of the RISC loading complex (RLC), also known as the micro-RNA (miRNA) loading complex (miRLC), which is composed of dicer1, ago2 and tarbp2. Within the RLC/miRLC, dicer1 and tarbp2 are required to process precursor miRNAs (pre-miRNAs) to mature miRNAs and then load them onto ago2. ago2 bound to the mature miRNA constitutes the minimal RISC and may subsequently dissociate from dicer1 and tarbp2. May also play a role in the production of short interfering RNAs (siRNAs) from double-stranded RNA (dsRNA) by dicer1. This Xenopus laevis (African clawed frog) protein is RISC-loading complex subunit tarbp2 (tarbp2).